We begin with the raw amino-acid sequence, 350 residues long: Ketol-acid reductoisomerase (NADP(+)) (350 aa).

One can recognise a KARI N-terminal Rossmann domain in the interval 4–187; sequence VSITTDYSRM…GGARANIIKT (184 aa). NADP(+) contacts are provided by residues 30 to 33, Arg53, Thr58, and 88 to 91; these read YGSQ and DMVQ. His113 is a catalytic residue. Gly139 contacts NADP(+). One can recognise a KARI C-terminal knotted domain in the interval 188 to 333; the sequence is TFKEETETDL…KQLRAKMVWL (146 aa). 4 residues coordinate Mg(2+): Asp196, Glu200, Glu232, and Glu236. Position 257 (Ser257) interacts with substrate.

This sequence belongs to the ketol-acid reductoisomerase family. Requires Mg(2+) as cofactor.

It carries out the reaction (2R)-2,3-dihydroxy-3-methylbutanoate + NADP(+) = (2S)-2-acetolactate + NADPH + H(+). It catalyses the reaction (2R,3R)-2,3-dihydroxy-3-methylpentanoate + NADP(+) = (S)-2-ethyl-2-hydroxy-3-oxobutanoate + NADPH + H(+). It participates in amino-acid biosynthesis; L-isoleucine biosynthesis; L-isoleucine from 2-oxobutanoate: step 2/4. It functions in the pathway amino-acid biosynthesis; L-valine biosynthesis; L-valine from pyruvate: step 2/4. Its function is as follows. Involved in the biosynthesis of branched-chain amino acids (BCAA). Catalyzes an alkyl-migration followed by a ketol-acid reduction of (S)-2-acetolactate (S2AL) to yield (R)-2,3-dihydroxy-isovalerate. In the isomerase reaction, S2AL is rearranged via a Mg-dependent methyl migration to produce 3-hydroxy-3-methyl-2-ketobutyrate (HMKB). In the reductase reaction, this 2-ketoacid undergoes a metal-dependent reduction by NADPH to yield (R)-2,3-dihydroxy-isovalerate. This chain is Ketol-acid reductoisomerase (NADP(+)), found in Xylella fastidiosa (strain Temecula1 / ATCC 700964).